Consider the following 289-residue polypeptide: Phosphatidylglycerol--prolipoprotein diacylglyceryl transferase (289 aa).

The next 3 helical transmembrane spans lie at 13-33 (LGPL…LLGW), 61-81 (FILW…VLFY), and 99-119 (GGMS…LFAM). Residue Arg-144 coordinates a 1,2-diacyl-sn-glycero-3-phospho-(1'-sn-glycerol). 2 helical membrane-spanning segments follow: residues 218–238 (GVVM…LENV) and 250–270 (LGLT…LWLI).

This sequence belongs to the Lgt family.

It is found in the cell inner membrane. The catalysed reaction is L-cysteinyl-[prolipoprotein] + a 1,2-diacyl-sn-glycero-3-phospho-(1'-sn-glycerol) = an S-1,2-diacyl-sn-glyceryl-L-cysteinyl-[prolipoprotein] + sn-glycerol 1-phosphate + H(+). It functions in the pathway protein modification; lipoprotein biosynthesis (diacylglyceryl transfer). Functionally, catalyzes the transfer of the diacylglyceryl group from phosphatidylglycerol to the sulfhydryl group of the N-terminal cysteine of a prolipoprotein, the first step in the formation of mature lipoproteins. The chain is Phosphatidylglycerol--prolipoprotein diacylglyceryl transferase from Phenylobacterium zucineum (strain HLK1).